Reading from the N-terminus, the 233-residue chain is Large ribosomal subunit protein uL1 (233 aa).

It belongs to the universal ribosomal protein uL1 family. In terms of assembly, part of the 50S ribosomal subunit.

Binds directly to 23S rRNA. The L1 stalk is quite mobile in the ribosome, and is involved in E site tRNA release. Its function is as follows. Protein L1 is also a translational repressor protein, it controls the translation of the L11 operon by binding to its mRNA. The chain is Large ribosomal subunit protein uL1 from Shewanella amazonensis (strain ATCC BAA-1098 / SB2B).